The sequence spans 482 residues: Zinc metalloproteinase/disintegrin (482 aa).

The signal sequence occupies residues 1 to 20; sequence MIQVLLVTICLAAFPYQGSS. The propeptide occupies 21–189; sequence MILESGNVND…IKASQLVVTA (169 aa). Residues 197–393 enclose the Peptidase M12B domain; it reads RYIELVVVAD…HNPQCILNEP (197 aa). Ca(2+)-binding residues include Glu-200 and Asp-284. Cystine bridges form between Cys-308-Cys-388 and Cys-348-Cys-372. A Zn(2+)-binding site is contributed by His-333. Residue Glu-334 is part of the active site. Residues His-337 and His-343 each contribute to the Zn(2+) site. Ca(2+)-binding residues include Cys-388 and Asn-391. The propeptide occupies 394-409; that stretch reads LRTDTVSTPVSGNELL. In terms of domain architecture, Disintegrin spans 401 to 482; that stretch reads TPVSGNELLE…AGCPRNPFHA (82 aa). Intrachain disulfides connect Cys-415–Cys-430, Cys-417–Cys-425, Cys-424–Cys-447, Cys-438–Cys-444, Cys-443–Cys-468, and Cys-456–Cys-475. The Cell attachment site motif lies at 460–462; that stretch reads RGD.

This sequence belongs to the venom metalloproteinase (M12B) family. P-II subfamily. P-IId sub-subfamily. Homodimer; disulfide-linked (disintegrin). Requires Zn(2+) as cofactor. Expressed by the venom gland.

The protein resides in the secreted. In terms of biological role, this recombinant protein hydrolyzes fibronectin, but has no effect on type I gelatin and type I to V collagens. Selectively hydrolyzes the Aalpha-chain of fibrinogen (FGA), but has no effect on fibrin. Functionally, inhibits ADP-induced platelet aggregation. Its function is as follows. Recombinant metalloproteinase-disintegrin Mt-d-I (393-408): hydrolyzes type I gelatin, type III and V collagens, but has no effect on type I, II, IV collagens and fibronectin. Selectively hydrolyzes the Aalpha-chain of fibrinogen, but has no effect on fibrin. May induce hemorrhage in vascular tissue. Strongly inhibits ADP-induced platelet aggregation. When concentrated, Mt-d-I undergoes autoproteolytic processing into metalloproteinase and disintegrin. The protein is Zinc metalloproteinase/disintegrin of Gloydius brevicauda (Korean slamosa snake).